The following is a 154-amino-acid chain: Protein X (154 aa).

The interval 68 to 117 (PCALRFTSARRMETTVNAPWSLPTVLHKRTIGLSGRSMTWIEEYIKDCVF) is mitochondrial targeting sequence.

Belongs to the orthohepadnavirus protein X family. In terms of assembly, may form homodimer. May interact with host CEBPA, CFLAR, CREB1, DDB1, E4F1, HBXIP, HSPD1/HSP60, NFKBIA, POLR2E and SMAD4. Interacts with host SMC5-SMC6 complex and induces its degradation. Interacts with host TRPC4AP; leading to prevent ubiquitination of TRPC4AP. Interacts with host PLSCR1; this interaction promotes ubiquitination and degradation of HBx and impairs HBx-mediated cell proliferation. In terms of processing, a fraction may be phosphorylated in insect cells and HepG2 cells, a human hepatoblastoma cell line. Phosphorylated in vitro by host protein kinase C or mitogen-activated protein kinase. N-acetylated in insect cells.

It localises to the host cytoplasm. The protein localises to the host nucleus. It is found in the host mitochondrion. Functionally, multifunctional protein that plays a role in silencing host antiviral defenses and promoting viral transcription. Does not seem to be essential for HBV infection. May be directly involved in development of cirrhosis and liver cancer (hepatocellular carcinoma). Most of cytosolic activities involve modulation of cytosolic calcium. The effect on apoptosis is controversial depending on the cell types in which the studies have been conducted. May induce apoptosis by localizing in mitochondria and causing loss of mitochondrial membrane potential. May also modulate apoptosis by binding host CFLAR, a key regulator of the death-inducing signaling complex (DISC). Promotes viral transcription by using the host E3 ubiquitin ligase DDB1 to target the SMC5-SMC6 complex to proteasomal degradation. This host complex would otherwise bind to viral episomal DNA, and prevents its transcription. Moderately stimulates transcription of many different viral and cellular transcription elements. Promoters and enhancers stimulated by HBx contain DNA binding sites for NF-kappa-B, AP-1, AP-2, c-EBP, ATF/CREB, or the calcium-activated factor NF-AT. The chain is Protein X from Homo sapiens (Human).